We begin with the raw amino-acid sequence, 329 residues long: L-arabinose-binding periplasmic protein (329 aa).

Positions 1-23 are cleaved as a signal peptide; the sequence is MHKFTKALAAIGLAAVMSQSAMA.

The protein belongs to the bacterial solute-binding protein 2 family.

It localises to the periplasm. In terms of biological role, involved in the high-affinity L-arabinose membrane transport system. Binds with high affinity to arabinose, but can also bind D-galactose (approximately 2-fold reduction) and D-fucose (approximately 40-fold reduction). This is L-arabinose-binding periplasmic protein (araF) from Escherichia coli (strain K12).